A 225-amino-acid polypeptide reads, in one-letter code: Insulin-induced gene 2 protein (225 aa).

The Cytoplasmic segment spans residues 1-28 (MAENDAKPTLPKKSGPYISSVTSHGMNL). The chain crosses the membrane as a helical span at residues 29-51 (VIRGIVLFFIGVFLALVLNLLQI). At 52 to 70 (QRNVTLFPPDVITSIFSSA) the chain is on the lumenal side. The chain crosses the membrane as a helical span at residues 71–88 (WWVPPCCGTASAVIGLLY). Over 89–103 (PCMDRHLGEPHKFKR) the chain is Cytoplasmic. A helical membrane pass occupies residues 104–126 (EWSSVMRCVAVFVGINHASAKVD). The Lumenal portion of the chain corresponds to 127–129 (FAN). A helical membrane pass occupies residues 130 to 148 (NIQLSLTLAALSIGLWWTF). Topologically, residues 149-153 (DRSRS) are cytoplasmic. A helical membrane pass occupies residues 154-175 (GFGLGVGIAFLATLVSQLLVYN). Residues 176–189 (GVYQYTSPDFLYVR) are Lumenal-facing. Residues 190-207 (SWLPCIFFAGGITMGNIG) traverse the membrane as a helical segment. The Cytoplasmic portion of the chain corresponds to 208-225 (RQLAMYECKVIAEKSHED). The KxHxx signature appears at 219-225 (AEKSHED).

The protein belongs to the INSIG family. In terms of assembly, interacts with SCAP; interaction is direct and only takes place in the presence of sterols; it prevents interaction between SCAP and the coat protein complex II (COPII). Associates with the SCAP-SREBP complex; association is mediated via its interaction with SCAP and only takes place in the presence of sterols.

The protein resides in the endoplasmic reticulum membrane. Functionally, oxysterol-binding protein that mediates feedback control of cholesterol synthesis by controlling both endoplasmic reticulum to Golgi transport of SCAP and degradation of HMGCR. Acts as a negative regulator of cholesterol biosynthesis by mediating the retention of the SCAP-SREBP complex in the endoplasmic reticulum, thereby blocking the processing of sterol regulatory element-binding proteins (SREBPs). Binds oxysterol, including 22-hydroxycholesterol, 24-hydroxycholesterol, 25-hydroxycholesterol and 27-hydroxycholesterol, regulating interaction with SCAP and retention of the SCAP-SREBP complex in the endoplasmic reticulum. In presence of oxysterol, interacts with SCAP, retaining the SCAP-SREBP complex in the endoplasmic reticulum, thereby preventing SCAP from escorting SREBPs to the Golgi. Sterol deprivation reduces oxysterol-binding, disrupting the interaction between INSIG2 and SCAP, thereby promoting Golgi transport of the SCAP-SREBP complex, followed by processing and nuclear translocation of SREBPs. Also regulates cholesterol synthesis by regulating degradation of HMGCR. The polypeptide is Insulin-induced gene 2 protein (Gallus gallus (Chicken)).